We begin with the raw amino-acid sequence, 174 residues long: MTYVLFLLSVSLVMGFVGFSSKPSPIYGGLVLIVSGVVGCTIILNYGGGYMGLMVFLIYLGGMMVVFGYTTAMAIEEYPEAWGSGVEVLVSVLVGLAMEVGLVLWVKEYDGVVVVVNFNSVGSWMIYEGEGPGLIREDPIGAGALYDYGRWLVVVTGWTLFVGVYIVIEIARGN.

A run of 6 helical transmembrane segments spans residues 1–21 (MTYV…GFSS), 24–44 (SPIY…TIIL), 47–67 (GGGY…MVVF), 86–106 (VEVL…VLWV), 111–131 (GVVV…EGEG), and 151–171 (WLVV…IEIA).

The protein belongs to the complex I subunit 6 family. As to quaternary structure, core subunit of respiratory chain NADH dehydrogenase (Complex I) which is composed of 45 different subunits.

It localises to the mitochondrion inner membrane. It carries out the reaction a ubiquinone + NADH + 5 H(+)(in) = a ubiquinol + NAD(+) + 4 H(+)(out). Its function is as follows. Core subunit of the mitochondrial membrane respiratory chain NADH dehydrogenase (Complex I) which catalyzes electron transfer from NADH through the respiratory chain, using ubiquinone as an electron acceptor. Essential for the catalytic activity and assembly of complex I. This is NADH-ubiquinone oxidoreductase chain 6 (MT-ND6) from Pan paniscus (Pygmy chimpanzee).